A 767-amino-acid chain; its full sequence is GPI ethanolamine phosphate transferase 2 (767 aa).

Residues asparagine 186 and asparagine 401 are each glycosylated (N-linked (GlcNAc...) asparagine). A run of 2 helical transmembrane segments spans residues 407–427 and 434–454; these read LGLF…YGLG and VTFL…SSYV. Asparagine 490 carries N-linked (GlcNAc...) asparagine glycosylation. A run of 3 helical transmembrane segments spans residues 513–533, 538–558, and 595–615; these read ILWA…CLNS, IWRS…LVFV, and IPIF…KMSA. N-linked (GlcNAc...) asparagine glycosylation is present at asparagine 627. A run of 3 helical transmembrane segments spans residues 655 to 675, 695 to 715, and 733 to 755; these read SVVL…IWWA, TLLT…CTML, and LAWT…SQVL.

It belongs to the PIGG/PIGN/PIGO family. PIGG subfamily.

The protein resides in the endoplasmic reticulum membrane. The protein operates within glycolipid biosynthesis; glycosylphosphatidylinositol-anchor biosynthesis. In terms of biological role, ethanolamine phosphate transferase involved in glycosylphosphatidylinositol-anchor biosynthesis. Transfers ethanolamine phosphate to the GPI second mannose. The chain is GPI ethanolamine phosphate transferase 2 (las21) from Aspergillus fumigatus (strain ATCC MYA-4609 / CBS 101355 / FGSC A1100 / Af293) (Neosartorya fumigata).